A 1243-amino-acid chain; its full sequence is MVNWTKEQEEAIYTSGSDILVAAAAGSGKTAVLVERIIQKLLAEHNPTNIDALLVVTFTNAAAQEMRNRVGAALEQALAANPSSIHLKKQLSLLQRASISTLHSFCLDIVKKNAYILDIDPSFRIADDMEMDLLKQEVLDDLLEEWYGDSNPNQDSFFEVVNRFTSDRSDAEMEELIRSLHTFAMQSPWPNQWLDKLVQTYNIPEEWTEEELPWMNVLRDEVSRQLDAVSQEIDIAYSITQEADGPYHYAKTIEEEKAIIQEALKNMESWKYLQQSMLQVKFGKLSGKKVDCDEEKKTKVKKLRDSYKKRFQKMQEVWFARNLDAHVYDMRVLAPVIKHLVELVKQFQDSFAKVKKEKAVVDFSDLEHYCLQILIDESSTEEEVIPSTVAMQLQRQFTEVLVDEYQDTNMVQETILQLISDRQGSGNMFMVGDVKQSIYRFRHAEPSLFIDKYKRFSNSDDPSIRIDLARNFRSRENVLLGANYIFRQLFDEDLGEISYDDAAELIYGNKMYDDHPLEAKPELLLIDNNSEDVEQSDNEETVEDLEKAQIEARAYAKQIKNWIGTPEDEIPMQVVDKATGKQRDLQYKDIVILMRSMTWASTIADELQQQGIPTYADLSTGYFEAIEIKVMLSFLKVIDNPRQDIPLASILRSPIIGLEEDQLASIRLADRKASFYEAVQRYLQNEQDNSDTVKSLIRFMEMLNDFRQSARQGSLSELIWDIYRETGYYDFVGAIPGGKQRQANLRALYDRARGYESTSFRGLYRFLRFIERMEERGKDLGAARALSEQEDVVRIMTIHKSKGLEFPIVILGGMNKEFNQRDLSEKYLLHKDLGFASKYIDPVKRIQYPTLYYHAVRQAKFRDMLSEEIRVLYVALTRAKEKLLMVGTVPSIEKKLEKWQRIVDHPSWVLPAYFRMESKTYLDWVGPALLRHVGSEKIRTENIGNQVLESINQDPSDWQITMNHALDYMDMKDSSMDNDDNLKEKVFNWESVETEQEGLKNDVDARLSYEYAYKQATVFRAKQSVTELKRQQEVKDDYSDQQILPPSHGPIGKRPNFLQKKLKLSPAEKGTALHTVMQHLPMTHVLSEPEIEENIEKMVLEEKLTRMEADSINIRAVERFFHTEIASKIISGNDMHREVPFSIMLPASEVYANWKDQSNEKVLIQGVIDCLLQADTGWIILDYKTDFIEDNPTSQKEQELIHRYQTQMTLYRRAIEQIWKQPVEQTYLYFFSQQLLIEVPYRD.

The UvrD-like helicase ATP-binding domain occupies 2–475 (VNWTKEQEEA…IDLARNFRSR (474 aa)). Position 23-30 (23-30 (AAAGSGKT)) interacts with ATP. Residues 502 to 803 (AAELIYGNKM…RIMTIHKSKG (302 aa)) form the UvrD-like helicase C-terminal domain.

It belongs to the helicase family. AddA subfamily. As to quaternary structure, heterodimer of AddA and AddB/RexB. Mg(2+) serves as cofactor.

The catalysed reaction is Couples ATP hydrolysis with the unwinding of duplex DNA by translocating in the 3'-5' direction.. It carries out the reaction ATP + H2O = ADP + phosphate + H(+). The heterodimer acts as both an ATP-dependent DNA helicase and an ATP-dependent, dual-direction single-stranded exonuclease. Recognizes the chi site generating a DNA molecule suitable for the initiation of homologous recombination. The AddA nuclease domain is required for chi fragment generation; this subunit has the helicase and 3' -&gt; 5' nuclease activities. The polypeptide is ATP-dependent helicase/nuclease subunit A (Oceanobacillus iheyensis (strain DSM 14371 / CIP 107618 / JCM 11309 / KCTC 3954 / HTE831)).